Reading from the N-terminus, the 96-residue chain is MSRVCELSGKAPMTGNTVSHANNKSRRRFLPNLNDVTLISDVLGQSFKLRISAAALRTVDHRGGLDAFLAKAKDDELSVKARAIKKEIEKAQATAA.

Positions 1–23 (MSRVCELSGKAPMTGNTVSHANN) are disordered.

The protein belongs to the bacterial ribosomal protein bL28 family.

This is Large ribosomal subunit protein bL28 from Cereibacter sphaeroides (strain ATCC 17029 / ATH 2.4.9) (Rhodobacter sphaeroides).